The chain runs to 492 residues: BTB/POZ domain and ankyrin repeat-containing protein NOOT2 (492 aa).

Residues 25–107 (SDVTFQVEGR…LYSGQVSIVP (83 aa)) enclose the BTB domain. Residues 113 to 127 (RPNCGERGCWHTHCT) form a C2HC NPR-type zinc finger. Residues cysteine 116, cysteine 121, histidine 123, and cysteine 126 each coordinate Zn(2+). ANK repeat units lie at residues 248–277 (QKIRRMRRALDSSDVELVKLMVMGEGLNLD), 278–307 (EALALHYAVENCSREVVKALLELGAADVNY), 312–341 (AGKTSLHVAAEMVSPEMVAVLLDHHADPTV), and 345–379 (DGVTPLDILRTLTSDFLFKGAVPGLNHIEPNKLRL). Disordered stretches follow at residues 395–439 (ENNA…NSIG) and 455–492 (TQMGGDDDNRHNNSHREAMNRQGGHGCDPSMYHHSHDF). Composition is skewed to low complexity over residues 397–413 (NASNNNNNNNNASSSAA) and 425–439 (SSSSGNNNNNNNSIG). Residues 461-473 (DDNRHNNSHREAM) are compositionally biased toward basic and acidic residues.

The protein belongs to the plant 'ANKYRIN-BTB/POZ' family. 'NOOT-BOP-COCH-like' (NBCL) subfamily. Homodimer.

Its subcellular location is the nucleus. The protein localises to the cytoplasm. It localises to the cell membrane. Its pathway is protein modification; protein ubiquitination. May act as a substrate-specific adapter of an E3 ubiquitin-protein ligase complex (CUL3-RBX1-BTB) which mediates the ubiquitination and subsequent proteasomal degradation of target proteins. Transcriptional co-regulator involved in the promotion of leaf and floral meristem fate and determinacy. Required for the abscission of senescent organs, probably by regulating the cell wall disorganization in abscission zones (AZs, e.g. pulvini at the base of leaves). Involved in the coordination of the symbiotic nodule developmental program; promotes the formation of root nodules by interacting directly with APP1 to modulate the expression of the nuclear transcription factor Y subunit (NF-YA1), a key nodulin. Involved in the regulation of indeterminate nodule identity in association with NOOT1. The protein is BTB/POZ domain and ankyrin repeat-containing protein NOOT2 of Medicago truncatula (Barrel medic).